A 521-amino-acid chain; its full sequence is Probable protein kinase UbiB (521 aa).

The region spanning 119–497 (QFDETPIASA…QKRTNRLLQT (379 aa)) is the Protein kinase domain. ATP is bound by residues 125 to 133 (IASASIAQV) and K151. D286 functions as the Proton acceptor in the catalytic mechanism. Residues 496-516 (QTIIYGGIGFVLGLLAMQLLV) traverse the membrane as a helical segment.

This sequence belongs to the ABC1 family. UbiB subfamily.

It is found in the cell inner membrane. It functions in the pathway cofactor biosynthesis; ubiquinone biosynthesis [regulation]. In terms of biological role, is probably a protein kinase regulator of UbiI activity which is involved in aerobic coenzyme Q (ubiquinone) biosynthesis. In Variovorax paradoxus (strain S110), this protein is Probable protein kinase UbiB.